A 233-amino-acid chain; its full sequence is Ribosome maturation factor RimP (233 aa).

Residues 167–179 (RGKAAEREKKRDL) show a composition bias toward basic and acidic residues. A disordered region spans residues 167 to 233 (RGKAAEREKK…RARRGEIDPD (67 aa)). Over residues 187-196 (PHAKPAAQAK) the composition is skewed to low complexity. Basic and acidic residues predominate over residues 220-233 (LAADRARRGEIDPD).

It belongs to the RimP family.

It is found in the cytoplasm. In terms of biological role, required for maturation of 30S ribosomal subunits. The polypeptide is Ribosome maturation factor RimP (Bradyrhizobium sp. (strain ORS 278)).